We begin with the raw amino-acid sequence, 256 residues long: Major prion protein (256 aa).

The N-terminal stretch at 1–24 (MVKSHIGSWILVLFVAMWSDVGLC) is a signal peptide. The interval 25 to 233 (KKRPKPGGGW…ESEAYYQRGA (209 aa)) is interaction with GRB2, ERI3 and SYN1. The segment at 28 to 110 (PKPGGGWNTG…QWNKPSKPKT (83 aa)) is disordered. 5 consecutive repeat copies span residues 54-62 (PQGGGGWGQ), 63-70 (PHGGGWGQ), 71-78 (PHGGGWGQ), 79-86 (PHGGGWGQ), and 87-95 (PHGGGGWGQ). Positions 54–95 (PQGGGGWGQPHGGGWGQPHGGGWGQPHGGGWGQPHGGGGWGQ) are 5 X 8 AA tandem repeats of P-H-G-G-G-W-G-Q. Over residues 55 to 97 (QGGGGWGQPHGGGWGQPHGGGWGQPHGGGWGQPHGGGGWGQGG) the composition is skewed to gly residues. Positions 64, 65, 66, 72, 73, 74, 80, 81, 82, 88, 90, and 91 each coordinate Cu(2+). A disulfide bond links Cys182 and Cys217. N-linked (GlcNAc...) asparagine glycans are attached at residues Asn184 and Asn200. Residue Ala233 is the site of GPI-anchor amidated alanine attachment. The propeptide at 234–256 (SVILFSSPPVILLISFLIFLIVG) is removed in mature form.

Belongs to the prion family. Monomer and homodimer. Has a tendency to aggregate into amyloid fibrils containing a cross-beta spine, formed by a steric zipper of superposed beta-strands. Soluble oligomers may represent an intermediate stage on the path to fibril formation. Copper binding may promote oligomerization. Interacts with GRB2, APP, ERI3/PRNPIP and SYN1. Mislocalized cytosolically exposed PrP interacts with MGRN1; this interaction alters MGRN1 subcellular location and causes lysosomal enlargement. Interacts with KIAA1191.

Its subcellular location is the cell membrane. It localises to the golgi apparatus. Its primary physiological function is unclear. Has cytoprotective activity against internal or environmental stresses. May play a role in neuronal development and synaptic plasticity. May be required for neuronal myelin sheath maintenance. May play a role in iron uptake and iron homeostasis. Soluble oligomers are toxic to cultured neuroblastoma cells and induce apoptosis (in vitro). Association with GPC1 (via its heparan sulfate chains) targets PRNP to lipid rafts. Also provides Cu(2+) or Zn(2+) for the ascorbate-mediated GPC1 deaminase degradation of its heparan sulfate side chains. The chain is Major prion protein (PRNP) from Cervus elaphus (Red deer).